A 292-amino-acid polypeptide reads, in one-letter code: MNDYIIRATAANSQIRAFACISTEIVETARQAHNTSPVVTAALGRLLTGGAMMGSMMKGEKDLLTLKIACSGPIGGLTVTADAGANVKGYANQNVVNLPPSPKGKLDVGKALDIGVLSVIKDMGLKEPYVGQTDLVTGEIAEDLTYYFATSEQVPSSVALGVLMNRDNTVRCAGGFIIQLLPFAEEEVIEKLEKKIGEITSVTSMLDKGMTPEEILQELLGEFGLTILDKIPTKFTCNCTKERVEKAIVSIGKKDLQEMIDDEKPIEVNCHFCNTNYEFSVEELKDIITRSN.

Cystine bridges form between cysteine 237–cysteine 239 and cysteine 270–cysteine 273.

This sequence belongs to the HSP33 family. In terms of processing, under oxidizing conditions two disulfide bonds are formed involving the reactive cysteines. Under reducing conditions zinc is bound to the reactive cysteines and the protein is inactive.

It is found in the cytoplasm. Functionally, redox regulated molecular chaperone. Protects both thermally unfolding and oxidatively damaged proteins from irreversible aggregation. Plays an important role in the bacterial defense system toward oxidative stress. In Lachnoclostridium phytofermentans (strain ATCC 700394 / DSM 18823 / ISDg) (Clostridium phytofermentans), this protein is 33 kDa chaperonin.